A 385-amino-acid polypeptide reads, in one-letter code: 1-deoxy-D-xylulose 5-phosphate reductoisomerase (385 aa).

Thr-10, Gly-11, Ser-12, Ile-13, Lys-37, and Asn-124 together coordinate NADPH. A 1-deoxy-D-xylulose 5-phosphate-binding site is contributed by Lys-125. Glu-126 lines the NADPH pocket. Asp-150 provides a ligand contact to Mn(2+). Ser-151, Glu-152, Ser-176, and His-199 together coordinate 1-deoxy-D-xylulose 5-phosphate. A Mn(2+)-binding site is contributed by Glu-152. Gly-205 serves as a coordination point for NADPH. 1-deoxy-D-xylulose 5-phosphate is bound by residues Ser-212, Asn-217, Lys-218, and Glu-221. Mn(2+) is bound at residue Glu-221.

Belongs to the DXR family. The cofactor is Mg(2+). Requires Mn(2+) as cofactor.

The enzyme catalyses 2-C-methyl-D-erythritol 4-phosphate + NADP(+) = 1-deoxy-D-xylulose 5-phosphate + NADPH + H(+). The protein operates within isoprenoid biosynthesis; isopentenyl diphosphate biosynthesis via DXP pathway; isopentenyl diphosphate from 1-deoxy-D-xylulose 5-phosphate: step 1/6. Its function is as follows. Catalyzes the NADPH-dependent rearrangement and reduction of 1-deoxy-D-xylulose-5-phosphate (DXP) to 2-C-methyl-D-erythritol 4-phosphate (MEP). This is 1-deoxy-D-xylulose 5-phosphate reductoisomerase from Clostridium botulinum (strain Okra / Type B1).